A 397-amino-acid polypeptide reads, in one-letter code: MSKIIAINAGSSSLKFQLFEMPSETVLTKGLVERIGLEDSIFTITVDGEKQKEITNIPDHAVAVNMLLKKLTENGIVKSLDEIGGIGHRVVHGGEKFADSVLITDEVLADIEELSDLAPLHNPANVVGIKAFQEVLPNVPAVAVFDTAFHQTMPESAFLYSLPYEYYEKFGIRKYGFHGTSHKYVTERAAELLGRPIESLSLLSCHLGNGASIAAVEGGKSIDTSMGFTPLAGVTMGTRSGNLDPALIPYIMEKTGQTVEEVVNVLNKKSGMLGLTGYSSDLRDIIAKEEEGDHRAKVALDVFVSRIHKYIGSYTARMKGVDAIIFTAGVGENSAIIRERVLEGLEYMGVYFDAKRNNVFGEEAFISFPHSPVKIIVIPTDEEVMIARDVLRLGDIG.

Position 8 (Asn8) interacts with Mg(2+). Lys15 serves as a coordination point for ATP. Arg89 contributes to the substrate binding site. Asp146 functions as the Proton donor/acceptor in the catalytic mechanism. ATP-binding positions include 206 to 210 (HLGNG), 281 to 283 (DLR), and 329 to 333 (GVGEN). Glu382 lines the Mg(2+) pocket.

It belongs to the acetokinase family. In terms of assembly, homodimer. Requires Mg(2+) as cofactor. Mn(2+) serves as cofactor.

The protein resides in the cytoplasm. It carries out the reaction acetate + ATP = acetyl phosphate + ADP. Its pathway is metabolic intermediate biosynthesis; acetyl-CoA biosynthesis; acetyl-CoA from acetate: step 1/2. In terms of biological role, catalyzes the formation of acetyl phosphate from acetate and ATP. Can also catalyze the reverse reaction. This is Acetate kinase from Bacillus cereus (strain ATCC 14579 / DSM 31 / CCUG 7414 / JCM 2152 / NBRC 15305 / NCIMB 9373 / NCTC 2599 / NRRL B-3711).